Consider the following 119-residue polypeptide: Ribosome-binding factor A (119 aa).

Belongs to the RbfA family. In terms of assembly, monomer. Binds 30S ribosomal subunits, but not 50S ribosomal subunits or 70S ribosomes.

The protein localises to the cytoplasm. Its function is as follows. One of several proteins that assist in the late maturation steps of the functional core of the 30S ribosomal subunit. Associates with free 30S ribosomal subunits (but not with 30S subunits that are part of 70S ribosomes or polysomes). Required for efficient processing of 16S rRNA. May interact with the 5'-terminal helix region of 16S rRNA. The protein is Ribosome-binding factor A of Chlorobium limicola (strain DSM 245 / NBRC 103803 / 6330).